Reading from the N-terminus, the 453-residue chain is Nuclear distribution protein PAC1 (453 aa).

The LisH domain occupies 19-51 (QKDELHKSILDYFKTNNLHESFATLMREANQEG). The stretch at 69 to 96 (TSVIRLQKKIMEMESRISQLQEELSAAP) forms a coiled coil. WD repeat units lie at residues 120–161 (GHRL…RTLK), 162–201 (GHTKAVQDVDFDSKGNYVLSCSSDLSIKVWDANNDYKNIK), 205–244 (GHDHSVSSVRFLPGDDYIVSASRDKTIKIWEFSTGFCTKT), 247–286 (GHAEWVRSAIPSDDAKWLVSCSTDQTARVWDVSSGETKVE), 314–355 (LDPN…KTLT), 356–395 (GHDNWVRGLAFSPNGKSLLSVSDDKTMRLWDLQSGRCTRT), and 413–452 (IEAPIPPAQDGEEAGRKQPEARTVNVVATSSVDLTIKIWT).

This sequence belongs to the WD repeat LIS1/nudF family. In terms of assembly, self-associates. Interacts with NDL1 and dynein.

It localises to the cytoplasm. The protein resides in the cytoskeleton. It is found in the spindle pole. In terms of biological role, positively regulates the activity of the minus-end directed microtubule motor protein dynein. May enhance dynein-mediated microtubule sliding by targeting dynein to the microtubule plus end. Required for nuclear migration during vegetative growth as well as development. Required for localization of dynein to the mitotic spindle poles. Recruits additional proteins to the dynein complex at SPBs. Required for retrograde early endosome (EE) transport from the hyphal tip. This is Nuclear distribution protein PAC1 from Mycosarcoma maydis (Corn smut fungus).